The sequence spans 303 residues: Acetylglutamate kinase (303 aa).

Substrate is bound by residues 69–70 (GG), Arg91, and Asn201.

Belongs to the acetylglutamate kinase family. ArgB subfamily.

It is found in the cytoplasm. The enzyme catalyses N-acetyl-L-glutamate + ATP = N-acetyl-L-glutamyl 5-phosphate + ADP. It functions in the pathway amino-acid biosynthesis; L-arginine biosynthesis; N(2)-acetyl-L-ornithine from L-glutamate: step 2/4. Functionally, catalyzes the ATP-dependent phosphorylation of N-acetyl-L-glutamate. This chain is Acetylglutamate kinase, found in Novosphingobium aromaticivorans (strain ATCC 700278 / DSM 12444 / CCUG 56034 / CIP 105152 / NBRC 16084 / F199).